A 240-amino-acid chain; its full sequence is Oxygen-insensitive NADPH nitroreductase (240 aa).

FMN-binding positions include 11–15 (HRSIR), Ser-39, Gln-67, 128–131 (YIGG), and 167–169 (KPR).

This sequence belongs to the flavin oxidoreductase frp family. Homodimer. The cofactor is FMN.

Catalyzes the reduction of nitroaromatic compounds using NADPH. Has a broad electron acceptor specificity. Reduces nitrofurazone by a ping-pong bi-bi mechanism possibly to generate a two-electron transfer product. Major oxygen-insensitive nitroreductase in E.coli. The protein is Oxygen-insensitive NADPH nitroreductase (nfsA) of Escherichia coli (strain K12).